We begin with the raw amino-acid sequence, 175 residues long: NADH-ubiquinone oxidoreductase chain 6 (175 aa).

Transmembrane regions (helical) follow at residues 1–21 (MMYI…GFSS), 24–44 (SPVY…GIIM), 51–71 (LGLV…GYTI), 87–107 (VVLS…VWLF), 112–132 (ELVG…EGGF), and 148–168 (CGFW…FIAT).

It belongs to the complex I subunit 6 family. Core subunit of respiratory chain NADH dehydrogenase (Complex I) which is composed of 45 different subunits.

The protein localises to the mitochondrion inner membrane. It carries out the reaction a ubiquinone + NADH + 5 H(+)(in) = a ubiquinol + NAD(+) + 4 H(+)(out). Its function is as follows. Core subunit of the mitochondrial membrane respiratory chain NADH dehydrogenase (Complex I) which catalyzes electron transfer from NADH through the respiratory chain, using ubiquinone as an electron acceptor. Essential for the catalytic activity and assembly of complex I. The sequence is that of NADH-ubiquinone oxidoreductase chain 6 (MT-ND6) from Elephas maximus (Indian elephant).